Consider the following 202-residue polypeptide: Small ribosomal subunit protein uS4 (202 aa).

Residues 22 to 48 (TGKELARRPYAPGDHGQGRRGKLSEYG) form a disordered region. The 62-residue stretch at 93-154 (RRLDNMVYRL…KSKKLAVITG (62 aa)) folds into the S4 RNA-binding domain.

The protein belongs to the universal ribosomal protein uS4 family. As to quaternary structure, part of the 30S ribosomal subunit. Contacts protein S5. The interaction surface between S4 and S5 is involved in control of translational fidelity.

In terms of biological role, one of the primary rRNA binding proteins, it binds directly to 16S rRNA where it nucleates assembly of the body of the 30S subunit. Its function is as follows. With S5 and S12 plays an important role in translational accuracy. The sequence is that of Small ribosomal subunit protein uS4 from Lactiplantibacillus plantarum (strain ATCC BAA-793 / NCIMB 8826 / WCFS1) (Lactobacillus plantarum).